Consider the following 105-residue polypeptide: Synaptic plasticity regulator PANTS (105 aa).

It belongs to the UPF0545 family. As to quaternary structure, interacts with RTN4 isoform A/Nogo-A; the interaction results in enhanced RTN4-mediated inhibition of AMPA receptor clustering. Also interacts with NCAM1, RANBP2 and CCT8. Post-translationally, rapidly degraded by proteolysis following neuronal stimulation, resulting in increased AMPA receptor clustering. In the postnatal brain, expressed diffusely throughout the hippocampus at a low level at 8 weeks (at protein level). At 16 weeks, strongly expressed in the stratum lucidum of the hippocampus (at protein level). In developing and aging brain, expression is strongest in hippocampus, especially in areas CA3 and CA2, throughout the dorsoventral axis.

Its subcellular location is the synapse. The protein localises to the synaptic cleft. In terms of biological role, negatively regulates long-term potentiation and modulates adult synaptic plasticity. Stabilizes the interaction of RTN4 isoform A/Nogo-A with its receptors, inhibiting clustering of postsynaptic AMPA receptors at synaptic sites. Upon neuronal stimulation, degraded at synapses, reducing RTN4 signaling and allowing AMPA receptor clustering at individual synapses. In Mus musculus (Mouse), this protein is Synaptic plasticity regulator PANTS.